A 242-amino-acid chain; its full sequence is Probable 2-phosphosulfolactate phosphatase (242 aa).

This sequence belongs to the ComB family. It depends on Mg(2+) as a cofactor.

The enzyme catalyses (2R)-O-phospho-3-sulfolactate + H2O = (2R)-3-sulfolactate + phosphate. The protein is Probable 2-phosphosulfolactate phosphatase of Synechococcus sp. (strain JA-2-3B'a(2-13)) (Cyanobacteria bacterium Yellowstone B-Prime).